The following is a 78-amino-acid chain: DNA-directed RNA polymerase subunit omega (78 aa).

Belongs to the RNA polymerase subunit omega family. In terms of assembly, in cyanobacteria the RNAP catalytic core is composed of 2 alpha, 1 beta, 1 beta', 1 gamma and 1 omega subunit. When a sigma factor is associated with the core the holoenzyme is formed, which can initiate transcription.

It catalyses the reaction RNA(n) + a ribonucleoside 5'-triphosphate = RNA(n+1) + diphosphate. In terms of biological role, promotes RNA polymerase assembly. Latches the N- and C-terminal regions of the beta' subunit thereby facilitating its interaction with the beta and alpha subunits. This is DNA-directed RNA polymerase subunit omega from Prochlorococcus marinus subsp. pastoris (strain CCMP1986 / NIES-2087 / MED4).